Reading from the N-terminus, the 481-residue chain is tRNA pseudouridine(38/39) synthase (481 aa).

Ala-2 carries the post-translational modification N-acetylalanine. Positions 29-41 are enriched in basic and acidic residues; sequence KKEQAKNKEDSNI. The segment at 29–50 is disordered; it reads KKEQAKNKEDSNIRENSAGAGK. The active-site Nucleophile is the Asp-118. Tyr-195 contacts substrate. Phosphothreonine is present on residues Thr-456, Thr-466, and Thr-468.

The protein belongs to the tRNA pseudouridine synthase TruA family.

It localises to the nucleus. It carries out the reaction uridine(38/39) in tRNA = pseudouridine(38/39) in tRNA. Its function is as follows. Formation of pseudouridine at position 39 in the anticodon stem and loop of transfer RNAs. The polypeptide is tRNA pseudouridine(38/39) synthase (PUS3) (Homo sapiens (Human)).